Reading from the N-terminus, the 353-residue chain is Suppressor of RNA-mediated gene silencing (353 aa).

It belongs to the phytoreovirus non-structural protein 10 family.

In terms of biological role, suppressor of RNA-mediated gene silencing, also known as post-transcriptional gene silencing (PTGS), a mechanism of plant viral defense that limits the accumulation of viral RNAs. In Alopecurus aequalis (Barnyard grass), this protein is Suppressor of RNA-mediated gene silencing.